The sequence spans 119 residues: MVRCRTLVAAALALLLTPALAWYKPAAGSHHYSVGRAAGLLSSFHRFPSTRRSESPALRVGTVPLRNLEMRPSVRSLALCVKDVTPNLQSCQRQLNSRGTFQCKADVFLSLHKAECQSA.

The signal sequence occupies residues 1–21 (MVRCRTLVAAALALLLTPALA). Positions 53-119 (SESPALRVGT…SLHKAECQSA (67 aa)) are excised as a propeptide.

Belongs to the neuropeptide B/W family. In terms of tissue distribution, detected in a variety of tissues. High levels are found in the lymphoid organs, central nervous system, mammary gland and uterus.

It localises to the secreted. May be involved in the regulation of feeding, neuroendocrine system, memory and learning. May be involved in the afferent pain pathway. The protein is Neuropeptide B (Npb) of Rattus norvegicus (Rat).